We begin with the raw amino-acid sequence, 84 residues long: Apovitellenin-1 (84 aa).

This sequence belongs to the apovitellenin family. As to quaternary structure, monomer.

Functionally, protein component of the very low density lipoprotein (VLDL) of egg-laying females. Potent lipoprotein lipase inhibitor, preventing the loss of triglycerides from VLDL on their way from the liver to the growing oocytes. This is Apovitellenin-1 from Dromaius novaehollandiae (Emu).